The following is a 156-amino-acid chain: Ribosome maturation factor RimP (156 aa).

Belongs to the RimP family.

Its subcellular location is the cytoplasm. Its function is as follows. Required for maturation of 30S ribosomal subunits. This chain is Ribosome maturation factor RimP, found in Gloeobacter violaceus (strain ATCC 29082 / PCC 7421).